The chain runs to 44 residues: Protein PsbN (44 aa).

The chain crosses the membrane as a helical span at residues Phe6–Val26.

The protein belongs to the PsbN family.

Its subcellular location is the plastid. The protein resides in the chloroplast thylakoid membrane. Functionally, may play a role in photosystem I and II biogenesis. This is Protein PsbN from Stigeoclonium helveticum (Green alga).